The sequence spans 427 residues: MTEAMKITLSTQPADARWGEKATYSINNDGITLHLNGADDLGLIQRAARKIDGLGIKHVQLSGEGWDADRCWAFWQGYKAPKGTRKVEWPDLDDAQRQELDNRLMIIDWVRDTINAPAEELGPSQLAQRAVDLISNVAGDRVTYRITKGEDLREQGYMGLHTVGRGSERSPVLLALDYNPTGDKEAPVYACLVGKGITFDSGGYSIKQTAFMDSMKSDMGGAATVTGALAFAITRGLNKRVKLFLCCADNLISGNAFKLGDIITYRNGKKVEVMNTDAEGRLVLADGLIDASAQKPEMIIDAATLTGAAKTALGNDYHALFSFDDALAGRLLASAAQENEPFWRLPLAEFHRSQLPSNFAELNNTGSAAYPAGASTAAGFLSHFVENYQQGWLHIDCSATYRKAPVEQWSAGATGLGVRTIANLLTA.

Residues Lys195 and Asp200 each coordinate Mn(2+). Residue Lys207 is part of the active site. Mn(2+) contacts are provided by Asp218, Asp277, and Glu279. The active site involves Arg281.

Belongs to the peptidase M17 family. In terms of assembly, homohexamer. It depends on Mn(2+) as a cofactor.

The protein localises to the cytoplasm. The enzyme catalyses Release of an N-terminal amino acid, Xaa, from a peptide or arylamide. Xaa is preferably Glu or Asp but may be other amino acids, including Leu, Met, His, Cys and Gln.. Its function is as follows. Probably plays an important role in intracellular peptide degradation. In Escherichia coli (strain ATCC 8739 / DSM 1576 / NBRC 3972 / NCIMB 8545 / WDCM 00012 / Crooks), this protein is Peptidase B.